The sequence spans 430 residues: DNA polymerase IV 1 (430 aa).

Residues 45 to 225 (LAHIDCDAFY…KPVTLIWGVG (181 aa)) form the UmuC domain. Asp-49 and Asp-142 together coordinate Mg(2+). Glu-143 is an active-site residue.

The protein belongs to the DNA polymerase type-Y family. As to quaternary structure, monomer. The cofactor is Mg(2+).

The protein resides in the cytoplasm. It catalyses the reaction DNA(n) + a 2'-deoxyribonucleoside 5'-triphosphate = DNA(n+1) + diphosphate. Functionally, poorly processive, error-prone DNA polymerase involved in untargeted mutagenesis. Copies undamaged DNA at stalled replication forks, which arise in vivo from mismatched or misaligned primer ends. These misaligned primers can be extended by PolIV. Exhibits no 3'-5' exonuclease (proofreading) activity. May be involved in translesional synthesis, in conjunction with the beta clamp from PolIII. In Rhizobium meliloti (strain 1021) (Ensifer meliloti), this protein is DNA polymerase IV 1 (dinB1).